Here is a 94-residue protein sequence, read N- to C-terminus: Ribonuclease VapC3 (94 aa).

Mg(2+) is bound at residue Asp6.

The protein belongs to the PINc/VapC protein family. Mg(2+) is required as a cofactor.

Toxic component of a type II toxin-antitoxin (TA) system. An RNase. Its cognate antitoxin is VapB3. This Methanocaldococcus jannaschii (strain ATCC 43067 / DSM 2661 / JAL-1 / JCM 10045 / NBRC 100440) (Methanococcus jannaschii) protein is Ribonuclease VapC3 (vapC3).